The sequence spans 155 residues: MECPNCHQNASRVIDSRPSDENRAIRRRRECENCGFRFTTFERIETAPLLVVKNDGTREPFSRKKILHGVMAAGQKRPISSEQFEHLVDQVENKVRKQGVSEISSKKIGQYVMDDLADLDDVAYIRFASIYREFKDMSSFMKTMEDMMAKKEKGN.

The segment covering Met1–Ser11 has biased composition (polar residues). The tract at residues Met1–Asn22 is disordered. The segment at Cys3–Cys34 is a zinc-finger region. One can recognise an ATP-cone domain in the interval Leu49–Ser139.

It belongs to the NrdR family. The cofactor is Zn(2+).

Functionally, negatively regulates transcription of bacterial ribonucleotide reductase nrd genes and operons by binding to NrdR-boxes. The sequence is that of Transcriptional repressor NrdR from Lactobacillus acidophilus (strain ATCC 700396 / NCK56 / N2 / NCFM).